The sequence spans 116 residues: Immunoglobulin heavy variable 3-13 (116 aa).

A signal peptide spans Met-1–Cys-19. A framework-1 region spans residues Glu-20–Ser-44. An Ig-like domain is found at Glu-20–Arg-116. Cys-41 and Cys-114 are disulfide-bonded. The complementarity-determining-1 stretch occupies residues Gly-45–Asp-52. Residues Met-53–Ala-69 form a framework-2 region. Residues Ile-70–Pro-76 are complementarity-determining-2. Positions Tyr-77–Cys-114 are framework-3. The segment at Ala-115–Arg-116 is complementarity-determining-3.

As to quaternary structure, immunoglobulins are composed of two identical heavy chains and two identical light chains; disulfide-linked.

The protein resides in the secreted. Its subcellular location is the cell membrane. V region of the variable domain of immunoglobulin heavy chains that participates in the antigen recognition. Immunoglobulins, also known as antibodies, are membrane-bound or secreted glycoproteins produced by B lymphocytes. In the recognition phase of humoral immunity, the membrane-bound immunoglobulins serve as receptors which, upon binding of a specific antigen, trigger the clonal expansion and differentiation of B lymphocytes into immunoglobulins-secreting plasma cells. Secreted immunoglobulins mediate the effector phase of humoral immunity, which results in the elimination of bound antigens. The antigen binding site is formed by the variable domain of one heavy chain, together with that of its associated light chain. Thus, each immunoglobulin has two antigen binding sites with remarkable affinity for a particular antigen. The variable domains are assembled by a process called V-(D)-J rearrangement and can then be subjected to somatic hypermutations which, after exposure to antigen and selection, allow affinity maturation for a particular antigen. This chain is Immunoglobulin heavy variable 3-13, found in Homo sapiens (Human).